A 228-amino-acid polypeptide reads, in one-letter code: Sensory transduction protein RegX3 (228 aa).

Positions 3–116 constitute a Response regulatory domain; the sequence is SVLIVEDEES…ELIARIRAVL (114 aa). Asp52 carries the 4-aspartylphosphate modification. A DNA-binding region (ompR/PhoB-type) is located at residues 129-228; the sequence is DGVLEAGPVR…VRGLGYKLEG (100 aa).

Phosphorylated by SenX3.

Member of the two-component regulatory system SenX3/RegX3 involved in stress response. The system is involved in phosphate starvation response. Once phosphorylated by SenX3, activates the expression of the alkaline phosphatase phoA, the high-affinity phosphate transporter pstSCAB, phnDCE, phnF and senX3. May act as a negative regulator of NhaA. Acts by binding to a DNA motif consisting of an inverted repeat. This Mycolicibacterium smegmatis (strain ATCC 700084 / mc(2)155) (Mycobacterium smegmatis) protein is Sensory transduction protein RegX3.